The chain runs to 258 residues: Phosphate import ATP-binding protein PstB (258 aa).

In terms of domain architecture, ABC transporter spans 5 to 247 (IDISGLSAFY…ERIFSNPSVQ (243 aa)). 37-44 (GPSGCGKS) is an ATP binding site.

This sequence belongs to the ABC transporter superfamily. Phosphate importer (TC 3.A.1.7) family. As to quaternary structure, the complex is composed of two ATP-binding proteins (PstB), two transmembrane proteins (PstC and PstA) and a solute-binding protein (PstS).

It is found in the cell membrane. It catalyses the reaction phosphate(out) + ATP + H2O = ADP + 2 phosphate(in) + H(+). Functionally, part of the ABC transporter complex PstSACB involved in phosphate import. Responsible for energy coupling to the transport system. The chain is Phosphate import ATP-binding protein PstB from Streptomyces griseus.